A 488-amino-acid chain; its full sequence is Solute carrier family 41 member 3 (488 aa).

Composition is skewed to basic and acidic residues over residues 1 to 19 (MEGT…RLKE) and 27 to 36 (DAGRLPKASE). The tract at residues 1–36 (MEGTEARQRRLEGCGRLKELGPLPSHDAGRLPKASE) is disordered. A run of 9 helical transmembrane segments spans residues 63 to 83 (LIIG…LSWA), 147 to 167 (LAVV…ASLM), 189 to 209 (VITA…IVIG), 220 to 240 (IATP…LALM), 251 to 271 (WYLT…WLFI), 284 to 304 (YGWF…LILS), 377 to 397 (VLLF…CLVE), 406 to 426 (IFIL…LYLA), and 450 to 470 (GLGD…DWLL).

Belongs to the SLC41A transporter family.

It is found in the mitochondrion inner membrane. The enzyme catalyses Mg(2+)(in) + 2 Na(+)(out) = Mg(2+)(out) + 2 Na(+)(in). Its function is as follows. Na(+)/Mg(2+) ion exchanger that acts as a predominant Mg(2+) efflux system at the mitochondrial inner membrane. The polypeptide is Solute carrier family 41 member 3 (Slc41a3) (Mus musculus (Mouse)).